We begin with the raw amino-acid sequence, 174 residues long: Transcriptional repressor NrdR (174 aa).

The segment at 3–34 (CPICHFPETDVIDTRKLYEGEVIRRRRKCRAC) is a zinc-finger region. The ATP-cone domain maps to 49-139 (LMVVKKDGTR…VYRSFADIGK (91 aa)). The tract at residues 151–174 (EGTRNGHSSAATTDQGTTDNHSRM) is disordered. The span at 155-174 (NGHSSAATTDQGTTDNHSRM) shows a compositional bias: polar residues.

The protein belongs to the NrdR family. It depends on Zn(2+) as a cofactor.

Functionally, negatively regulates transcription of bacterial ribonucleotide reductase nrd genes and operons by binding to NrdR-boxes. This chain is Transcriptional repressor NrdR, found in Chloroflexus aggregans (strain MD-66 / DSM 9485).